We begin with the raw amino-acid sequence, 781 residues long: N-acetylneuraminate (7)9-O-acetyltransferase (781 aa).

Residues 1–15 (MAVLAYNLGKREINQ) are Cytoplasmic-facing. Residues 16-36 (YFSIKNAKLLAAAAVVLLTVF) traverse the membrane as a helical segment. Residues 37–308 (HAASRHYGSS…SAPPLSVLQK (272 aa)) are Lumenal-facing. The active-site Acyl-ester intermediate is serine 94. N-linked (GlcNAc...) asparagine glycosylation is found at asparagine 139, asparagine 185, and asparagine 239. Catalysis depends on residues aspartate 264 and histidine 267. A helical transmembrane segment spans residues 309–329 (LAAAVLLVSVVCFVLLGFSSH). A disordered region spans residues 330 to 350 (RKSRPAPDVESGEEKKHPAAV). At 330–354 (RKSRPAPDVESGEEKKHPAAVGQLN) the chain is on the cytoplasmic side. A helical membrane pass occupies residues 355 to 375 (PKGPLLAIGKMSLIMLYFYLC). Residues 376–386 (DRADIFMKEQK) are Lumenal-facing. A helical transmembrane segment spans residues 387 to 407 (FYTHSAFFIPLIYIFVLGVFY). At 408 to 430 (SENSKETKLLNREQTDEWKGWMQ) the chain is on the cytoplasmic side. A helical membrane pass occupies residues 431-451 (LVILIYHISGASAFIPVYMHV). Residue arginine 452 is a topological domain, lumenal. A helical transmembrane segment spans residues 453–473 (VLVAAYLFQTGYGHFSFFWLK). At 474–477 (GDFG) the chain is on the cytoplasmic side. A helical transmembrane segment spans residues 478 to 498 (LYRVCQVLFRLNFLVVVLCLV). At 499–504 (MDRPYQ) the chain is on the lumenal side. The helical transmembrane segment at 505-525 (FYYFVPLVTFWFAVIYATMAL) threads the bilayer. The Cytoplasmic segment spans residues 526–537 (WPQILQKQANGS). A helical membrane pass occupies residues 538-558 (AFWNLALLLKLLGLLLFIGFF). The Lumenal portion of the chain corresponds to 559–595 (AYSQELFEGIFSVWPLSKLFELQGSIHEWWFRWKLDR). A helical membrane pass occupies residues 596 to 616 (FAVVNGMLFAFIYLLLQKYQL). Topologically, residues 617–629 (LSEGKGEPLFSNK) are cytoplasmic. A helical transmembrane segment spans residues 630–650 (ISNCLLFVSVVSFMTYSIWAS). Residues 651 to 660 (GCKNKSECNE) lie on the Lumenal side of the membrane. An N-linked (GlcNAc...) asparagine glycan is attached at asparagine 654. Residues 661–681 (MHPYISVILAFILIRNIPGYA) traverse the membrane as a helical segment. Residues 682-687 (RSLYSS) lie on the Cytoplasmic side of the membrane. A helical transmembrane segment spans residues 688 to 708 (FFAWFGKISLELFICQYHIWL). At 709-714 (AADTKG) the chain is on the lumenal side. Residues 715-735 (ILVLIPGNPTLNIIVSTFIFV) form a helical membrane-spanning segment. Residues 736–756 (CVAHEISQITNDLAQVAIPKE) are Cytoplasmic-facing. Residues 757-777 (SGPLLKRLLGAGVFLVLVLTL) form a helical membrane-spanning segment. Residues 778–781 (SQKD) are Lumenal-facing.

Belongs to the PC-esterase family. CASD1 subfamily.

Its subcellular location is the golgi apparatus membrane. The catalysed reaction is CMP-N-acetyl-beta-neuraminate + acetyl-CoA = CMP-N-acetyl-9-O-acetyl-beta-neuraminate + CoA. It carries out the reaction a ganglioside GD3 (d18:1(4E)) + acetyl-CoA = a ganglioside Ac-O-7-GD3(d18:1(4E)) + CoA. It catalyses the reaction CMP-N-acetyl-beta-neuraminate + acetyl-CoA = CMP-N-acetyl-7-O-acetyl-beta-neuraminate + CoA. Key enzyme in the biosynthesis of O-acetylated (O-Ac) sialoglycans such as gangliosides O-AcGD3 and O-AcGD2, which affect various processes such as cell-cell interactions, host-pathogen recognition. Catalyzes the transfer of an acetyl group from a donor, the acetyl-coenzyme-A molecule (acetyl-CoA), to the C7/8/9 OH-position of a sialic acid residue. The primary site of O-acetyl group transfer on sialic acid seems to depend on cell type and can be C7, from which the O-acetyl group could subsequently migrate to the C8 and then to the C9 position, or at C9 with possibility of migrating to the C8 and then to the C7 position. Together with ST8SIA1 (GD3 synthase) it increases the levels of ganglioside Ac-O-7-GD3. Can transfer the acetyl group from acetyl-CoA to free sialate (N-acetylneuraminate, Neu5Ac) in vitro, but has preferred substrate specificity for CMP-activated sialate (CMP-Neu5Ac), resulting in the formation of 9-O-acetylated CMP-Neu5Ac (CMP-Neu5,9Ac2). CMP-Neu5,9Ac2 may be used by sialyltransferases as a sialate donor for glycoconjugate acceptors such as ganglioside GD3. O-acetylation at position C9 of ganglioside GD3 can counteract the pro-apoptotic effects of the ganglioside GD3 in tumor cells. The sequence is that of N-acetylneuraminate (7)9-O-acetyltransferase from Danio rerio (Zebrafish).